Reading from the N-terminus, the 100-residue chain is Urease subunit gamma (100 aa).

This sequence belongs to the urease gamma subunit family. In terms of assembly, heterotrimer of UreA (gamma), UreB (beta) and UreC (alpha) subunits. Three heterotrimers associate to form the active enzyme.

Its subcellular location is the cytoplasm. The catalysed reaction is urea + 2 H2O + H(+) = hydrogencarbonate + 2 NH4(+). It participates in nitrogen metabolism; urea degradation; CO(2) and NH(3) from urea (urease route): step 1/1. This Roseobacter denitrificans (strain ATCC 33942 / OCh 114) (Erythrobacter sp. (strain OCh 114)) protein is Urease subunit gamma.